Consider the following 209-residue polypeptide: MRKNNGIKWWGWVTLSVLVMVAGDGTLAFAQETGGSAGWRPVYDNVMLVINFLILVFLLAKLLKNPLKNFLKTRHDEVAKELERLETERERAANDVADTKKQVAAEGTHILEIRERIIAEGERTKLAIIENAKKESEFLIEAARRRIQGRFQEARQAFRSELIESAMSIVSRRLPQEIGPQDQARQVDLFFTSLDQAQSKFSSARSASR.

A helical transmembrane segment spans residues 9-29 (WWGWVTLSVLVMVAGDGTLAF).

Belongs to the ATPase B chain family. F-type ATPases have 2 components, F(1) - the catalytic core - and F(0) - the membrane proton channel. F(1) has five subunits: alpha(3), beta(3), gamma(1), delta(1), epsilon(1). F(0) has three main subunits: a(1), b(2) and c(10-14). The alpha and beta chains form an alternating ring which encloses part of the gamma chain. F(1) is attached to F(0) by a central stalk formed by the gamma and epsilon chains, while a peripheral stalk is formed by the delta and b chains.

It localises to the cell inner membrane. Functionally, f(1)F(0) ATP synthase produces ATP from ADP in the presence of a proton or sodium gradient. F-type ATPases consist of two structural domains, F(1) containing the extramembraneous catalytic core and F(0) containing the membrane proton channel, linked together by a central stalk and a peripheral stalk. During catalysis, ATP synthesis in the catalytic domain of F(1) is coupled via a rotary mechanism of the central stalk subunits to proton translocation. Component of the F(0) channel, it forms part of the peripheral stalk, linking F(1) to F(0). The chain is ATP synthase subunit b 2 from Desulfosudis oleivorans (strain DSM 6200 / JCM 39069 / Hxd3) (Desulfococcus oleovorans).